The chain runs to 342 residues: S-adenosylmethionine:tRNA ribosyltransferase-isomerase (342 aa).

Belongs to the QueA family. In terms of assembly, monomer.

Its subcellular location is the cytoplasm. It carries out the reaction 7-aminomethyl-7-carbaguanosine(34) in tRNA + S-adenosyl-L-methionine = epoxyqueuosine(34) in tRNA + adenine + L-methionine + 2 H(+). Its pathway is tRNA modification; tRNA-queuosine biosynthesis. In terms of biological role, transfers and isomerizes the ribose moiety from AdoMet to the 7-aminomethyl group of 7-deazaguanine (preQ1-tRNA) to give epoxyqueuosine (oQ-tRNA). The chain is S-adenosylmethionine:tRNA ribosyltransferase-isomerase from Streptococcus sanguinis (strain SK36).